A 504-amino-acid chain; its full sequence is Sugar transport protein 14 (504 aa).

Residues 1-25 (MAGGALTDEGGLKRAHLYEHRITSY) are Cytoplasmic-facing. Helical transmembrane passes span 26–46 (FIFACIVGSMGGSLFGYDLGV), 84–104 (ILTLFTSSLYFAGLISTFGAS), 121–141 (VSFFLGGVINAAAKNILMLIL), 144–164 (IFLGIGIGFGNQAVPLYLSEM), 171–191 (GTVNQLFQLTTCIGILVANLI), 205–225 (LSLGLATVPAILMFLGGLVLP), 286–308 (LVIGAIGLPAFQQLTGMNSILFY), 315–337 (SLGFGGSASLISSTITNAALVVA), 352–372 (FLLLEASVEMFCYMVVVGVTL), 382–402 (LPKSLGLILVVLICLFVLAYG), 428–448 (VVVCVNLFFTALIAQCFLVSL), and 454–474 (GIFLLFAGLILGMGSFVYFLL). Over 475–504 (PETKQVPIEEVYLLWRQHWLWKKYVEDVDE) the chain is Cytoplasmic.

The protein belongs to the major facilitator superfamily. Sugar transporter (TC 2.A.1.1) family.

Its subcellular location is the membrane. Mediates an active uptake of hexoses, probably by sugar/hydrogen symport. In Arabidopsis thaliana (Mouse-ear cress), this protein is Sugar transport protein 14 (STP14).